The primary structure comprises 505 residues: L-arabinose isomerase (505 aa).

Positions 308, 335, 352, and 453 each coordinate Mn(2+).

It belongs to the arabinose isomerase family. The cofactor is Mn(2+).

The enzyme catalyses beta-L-arabinopyranose = L-ribulose. It participates in carbohydrate degradation; L-arabinose degradation via L-ribulose; D-xylulose 5-phosphate from L-arabinose (bacterial route): step 1/3. Its function is as follows. Catalyzes the conversion of L-arabinose to L-ribulose. In Bifidobacterium longum (strain DJO10A), this protein is L-arabinose isomerase.